Reading from the N-terminus, the 333-residue chain is Protoheme IX farnesyltransferase (333 aa).

The next 7 helical transmembrane spans lie at 63–83 (LACTLGGGALAAAAAGVLNCI), 109–129 (AAFIGAISCTLAAAALLVSGV), 132–152 (LAAGLSLLGLCSYVLLYTAIL), 160–180 (IVIGGVAGAIPPLVGAAAASG), 188–208 (WLFALVMLWTPAHFWALALLL), 245–265 (GFGVWALPEGGLLYGLLLIPF), and 292–312 (WSIFYMFGICLLLVVSRLPMA).

Belongs to the UbiA prenyltransferase family. Protoheme IX farnesyltransferase subfamily.

It localises to the cell inner membrane. It catalyses the reaction heme b + (2E,6E)-farnesyl diphosphate + H2O = Fe(II)-heme o + diphosphate. Its pathway is porphyrin-containing compound metabolism; heme O biosynthesis; heme O from protoheme: step 1/1. Functionally, converts heme B (protoheme IX) to heme O by substitution of the vinyl group on carbon 2 of heme B porphyrin ring with a hydroxyethyl farnesyl side group. The sequence is that of Protoheme IX farnesyltransferase from Prochlorococcus marinus (strain MIT 9303).